Reading from the N-terminus, the 479-residue chain is Integrin-linked protein kinase 1 (479 aa).

Phosphoserine is present on residues Ser-17 and Ser-26. The disordered stretch occupies residues Phe-29 to Pro-73. Basic and acidic residues predominate over residues Pro-54–His-69. ANK repeat units lie at residues Asp-77–Ser-106 and Asp-110–Ala-139. In terms of domain architecture, Protein kinase spans Leu-194 to Val-461. Residues Lys-200–Ala-208 and Lys-222 each bind ATP. Asp-319 serves as the catalytic Proton acceptor.

The protein belongs to the protein kinase superfamily. Ser/Thr protein kinase family. In terms of assembly, interacts with CML9 and POT5/HAK5. Autophosphorylated at Ser-17 and Ser-26.

It is found in the cell membrane. The protein resides in the endoplasmic reticulum membrane. It catalyses the reaction L-seryl-[protein] + ATP = O-phospho-L-seryl-[protein] + ADP + H(+). The enzyme catalyses L-threonyl-[protein] + ATP = O-phospho-L-threonyl-[protein] + ADP + H(+). With respect to regulation, kinase activity is suppressed by interaction with CML9. Functionally, functions as a link between plant defense pathways, stress responses and potassium homeostasis. Promotes osmotic stress sensitivity, responses to the bacterial-derived pathogen-associated molecular pattern (PAMP) flg22, and resistance to bacterial pathogens. Promotes the accumulation of POT5/HAK5, a potassium transporter that mediates high-affinity uptake during potassium deficiency. This Arabidopsis thaliana (Mouse-ear cress) protein is Integrin-linked protein kinase 1.